We begin with the raw amino-acid sequence, 439 residues long: Ribosomal protein uS12 methylthiotransferase RimO (439 aa).

The 116-residue stretch at 3–118 folds into the MTTase N-terminal domain; the sequence is KKFYITTLGC…AGKILREKFP (116 aa). [4Fe-4S] cluster is bound by residues Cys12, Cys48, Cys81, Cys157, Cys161, and Cys164. In terms of domain architecture, Radical SAM core spans 143–370; sequence NYSKPYAYVK…RDVHLAILEE (228 aa). Residues 373–438 enclose the TRAM domain; the sequence is ESRIGQTYDA…EYDMNGTWIS (66 aa).

The protein belongs to the methylthiotransferase family. RimO subfamily. The cofactor is [4Fe-4S] cluster.

The protein resides in the cytoplasm. It carries out the reaction L-aspartate(89)-[ribosomal protein uS12]-hydrogen + (sulfur carrier)-SH + AH2 + 2 S-adenosyl-L-methionine = 3-methylsulfanyl-L-aspartate(89)-[ribosomal protein uS12]-hydrogen + (sulfur carrier)-H + 5'-deoxyadenosine + L-methionine + A + S-adenosyl-L-homocysteine + 2 H(+). In terms of biological role, catalyzes the methylthiolation of an aspartic acid residue of ribosomal protein uS12. In Leptospira borgpetersenii serovar Hardjo-bovis (strain L550), this protein is Ribosomal protein uS12 methylthiotransferase RimO.